The following is a 68-amino-acid chain: Non-specific lipid-transfer protein 2 (68 aa).

This sequence belongs to the plant LTP family.

Functionally, plant non-specific lipid-transfer proteins transfer phospholipids as well as galactolipids across membranes. May play a role in wax or cutin deposition in the cell walls of expanding epidermal cells and certain secretory tissues. The protein is Non-specific lipid-transfer protein 2 of Prunus armeniaca (Apricot).